A 348-amino-acid chain; its full sequence is Dihydroorotase (348 aa).

Zn(2+)-binding residues include His-14 and His-16. Substrate is bound by residues 16–18 and Asn-42; that span reads HLR. Lys-100, His-137, and His-175 together coordinate Zn(2+). At Lys-100 the chain carries N6-carboxylysine. His-137 contributes to the substrate binding site. Residue Leu-220 coordinates substrate. Residue Asp-248 participates in Zn(2+) binding. Asp-248 is a catalytic residue. Substrate-binding residues include His-252 and Ala-264.

Belongs to the metallo-dependent hydrolases superfamily. DHOase family. Class II DHOase subfamily. Homodimer. Requires Zn(2+) as cofactor.

It catalyses the reaction (S)-dihydroorotate + H2O = N-carbamoyl-L-aspartate + H(+). The protein operates within pyrimidine metabolism; UMP biosynthesis via de novo pathway; (S)-dihydroorotate from bicarbonate: step 3/3. Functionally, catalyzes the reversible cyclization of carbamoyl aspartate to dihydroorotate. The sequence is that of Dihydroorotase from Pseudomonas aeruginosa (strain UCBPP-PA14).